The sequence spans 223 residues: Crossover junction endodeoxyribonuclease RuvC (223 aa).

Active-site residues include aspartate 12, glutamate 73, and aspartate 146. Aspartate 12, glutamate 73, and aspartate 146 together coordinate Mg(2+). The disordered stretch occupies residues 182–223 (QGKLGKAKSTLNARNNAQVTGDAQVRAGHPSQFERPDRADPR). Residues 190-202 (STLNARNNAQVTG) are compositionally biased toward polar residues. Basic and acidic residues predominate over residues 213-223 (QFERPDRADPR).

It belongs to the RuvC family. Homodimer which binds Holliday junction (HJ) DNA. The HJ becomes 2-fold symmetrical on binding to RuvC with unstacked arms; it has a different conformation from HJ DNA in complex with RuvA. In the full resolvosome a probable DNA-RuvA(4)-RuvB(12)-RuvC(2) complex forms which resolves the HJ. It depends on Mg(2+) as a cofactor.

The protein resides in the cytoplasm. The enzyme catalyses Endonucleolytic cleavage at a junction such as a reciprocal single-stranded crossover between two homologous DNA duplexes (Holliday junction).. Its function is as follows. The RuvA-RuvB-RuvC complex processes Holliday junction (HJ) DNA during genetic recombination and DNA repair. Endonuclease that resolves HJ intermediates. Cleaves cruciform DNA by making single-stranded nicks across the HJ at symmetrical positions within the homologous arms, yielding a 5'-phosphate and a 3'-hydroxyl group; requires a central core of homology in the junction. The consensus cleavage sequence is 5'-(A/T)TT(C/G)-3'. Cleavage occurs on the 3'-side of the TT dinucleotide at the point of strand exchange. HJ branch migration catalyzed by RuvA-RuvB allows RuvC to scan DNA until it finds its consensus sequence, where it cleaves and resolves the cruciform DNA. The protein is Crossover junction endodeoxyribonuclease RuvC of Corynebacterium efficiens (strain DSM 44549 / YS-314 / AJ 12310 / JCM 11189 / NBRC 100395).